A 580-amino-acid polypeptide reads, in one-letter code: Mucolipin-1 (580 aa).

The interval 1–38 is disordered; the sequence is MTDPAGPRGSETERLLTPNPGYGTQVGPSPAPPTPPEE. At 1–65 the chain is on the cytoplasmic side; the sequence is MTDPAGPRGS…FRAKGRKPCK (65 aa). At Ser-10 the chain carries Phosphoserine. Positions 11-16 match the Dileucine motif; mediates targeting to lysosomes motif; it reads ETERLL. Residues 42–62 form an interaction with phosphoinositides region; it reads RRRLKYFFMSPCDKFRAKGRK. A helical transmembrane segment spans residues 66 to 86; the sequence is LMLQVVKILVVTVQLILFGLS. The Extracellular portion of the chain corresponds to 87–298; the sequence is NQLAVTFREE…VFRHGDNSFR (212 aa). The segment at 107–121 is extracellular/lumenal pore loop; that stretch reads LGYSDGADDTFAAYT. Cys-166 and Cys-192 are joined by a disulfide. Asn-230 carries an N-linked (GlcNAc...) asparagine glycan. Cys-253 and Cys-284 are joined by a disulfide. A helical membrane pass occupies residues 299-321; the sequence is LLFDVVVILTCSLSFLLCARSLL. Over 322–350 the chain is Cytoplasmic; it reads RGFLLQNEFVRFMWRQRRRVISLWERLEF. A helical membrane pass occupies residues 351–371; it reads VNGWYILLVTSDVLTISGTIM. Residues 372 to 382 lie on the Extracellular side of the membrane; it reads KIGIEAKNLAS. A helical transmembrane segment spans residues 383-405; it reads YDVCSILLGTSTLLVWVGVIRYL. Topologically, residues 406–427 are cytoplasmic; it reads TFFHNYNILIATLRVALPSVMR. A helical transmembrane segment spans residues 428–448; sequence FCCCVAVIYLGYCFCGWIVLG. Residues 449-456 lie on the Extracellular side of the membrane; sequence PYHVKFRS. Residues 457–477 constitute an intramembrane region (pore-forming); that stretch reads LSMVSECLFSLINGDDMFVTF. The short motif at 469–474 is the Selectivity filter element; that stretch reads NGDDMF. Over 478–491 the chain is Extracellular; sequence AAMQAQQGRSSLVW. Residues 492 to 513 traverse the membrane as a helical segment; it reads LFSQLYLYSFISLFIYMVLSLF. At 514 to 580 the chain is on the cytoplasmic side; it reads IALITGAYDT…PSEEHSLLVN (67 aa). 2 positions are modified to phosphoserine; by PAK: Ser-557 and Ser-559. Residues 565-567 form a required for palmitoylation and association with membranes region; that stretch reads CCC. Positions 573–578 match the Dileucine internalization motif; mediates AP2 complex-dependent internalization motif; it reads EEHSLL.

This sequence belongs to the transient receptor (TC 1.A.4) family. Polycystin subfamily. MCOLN1 sub-subfamily. Homotetramer. Homooligomer. Can heterooligomerize with MCOLN2 or MCOLN3; heteromeric assemblies have different channel properties as compared to the respective homooligomers and may be tissue-specific. Interacts with PDCD6. Interacts with TMEM163. Interacts with LAPTM4B. In terms of processing, palmitoylated; involved in association with membranes. Post-translationally, phosphorylation by PKA inhibits channel activity. Dephosphorylation increases activity. Proteolytically cleaved probably involving multiple lysosomal proteases including cathepsin B; inhibits lysosomal channel activity.

It localises to the late endosome membrane. It is found in the lysosome membrane. The protein localises to the cytoplasmic vesicle membrane. Its subcellular location is the cell projection. The protein resides in the phagocytic cup. It localises to the cytoplasmic vesicle. It is found in the phagosome membrane. The protein localises to the cell membrane. It carries out the reaction Ca(2+)(in) = Ca(2+)(out). The catalysed reaction is Fe(2+)(in) = Fe(2+)(out). The enzyme catalyses Mg(2+)(in) = Mg(2+)(out). It catalyses the reaction K(+)(in) = K(+)(out). It carries out the reaction Na(+)(in) = Na(+)(out). Its activity is regulated as follows. Channel activity is controlled by multiple regulatory mechanisms in different subcellular compartments. Channel function is transiently modulated by changes in Ca(2+) in a pH-dependent manner; pH changes modify the aggregation state of unitary channels; a negative cooperativity between extracellular/lumenal Ca(2+) and H(+) is suggested. Regulated by phosphoinositides in a compartment-specific manner: in lysosomes activated by PtdIns(3,5)P2 (Phosphatidylinositol 3,5-bisphosphate) and at the plasma membrane inhibited by PtdIns(4,5)P2 (Phosphatidylinositol 4,5-bisphosphate). In terms of biological role, nonselective cation channel probably playing a role in the regulation of membrane trafficking events and of metal homeostasis. Acts as a Ca(2+)-permeable cation channel with inwardly rectifying activity. Proposed to play a major role in Ca(2+) release from late endosome and lysosome vesicles to the cytoplasm, which is important for many lysosome-dependent cellular events, including the fusion and trafficking of these organelles, exocytosis and autophagy. Required for efficient uptake of large particles in macrophages in which Ca(2+) release from the lysosomes triggers lysosomal exocytosis. May also play a role in phagosome-lysosome fusion. Involved in lactosylceramide trafficking indicative for a role in the regulation of late endocytic membrane fusion/fission events. By mediating lysosomal Ca(2+) release is involved in regulation of mTORC1 signaling and in mTOR/TFEB-dependent lysosomal adaptation to environmental cues such as nutrient levels. Seems to act as lysosomal active oxygen species (ROS) sensor involved in ROS-induced TFEB activation and autophagy. Also functions as a Fe(2+) permeable channel in late endosomes and lysosomes. Also permeable to Mg(2+), Na(+). K(+) and Cs(+). Proposed to play a role in zinc homeostasis probably implicating its association with TMEM163. In adaptive immunity, TRPML2 and TRPML1 may play redundant roles in the function of the specialized lysosomes of B cells. May contribute to cellular lipase activity within the late endosomal pathway or at the cell surface which may be involved in processes of membrane reshaping and vesiculation, especially the growth of tubular structures. However, it is not known, whether it conveys the enzymatic activity directly, or merely facilitates the activity of an associated phospholipase. The protein is Mucolipin-1 (MCOLN1) of Macaca fascicularis (Crab-eating macaque).